The primary structure comprises 413 residues: L-cysteine:1D-myo-inositol 2-amino-2-deoxy-alpha-D-glucopyranoside ligase (413 aa).

The segment at 1-21 (MQSWSDTALPSVPGQGPPLRL) is disordered. Zn(2+) is bound at residue Cys-43. L-cysteinyl-5'-AMP is bound by residues 43 to 46 (CGIT), Thr-58, and 81 to 83 (NVT). Residues 45–55 (ITPYDATHLGH) carry the 'HIGH' region motif. Positions 187–192 (ERGGDP) match the 'ERGGDP' region motif. Residue Trp-227 coordinates L-cysteinyl-5'-AMP. Residue Cys-231 coordinates Zn(2+). 249-251 (GSD) lines the L-cysteinyl-5'-AMP pocket. His-256 provides a ligand contact to Zn(2+). Ile-283 lines the L-cysteinyl-5'-AMP pocket. The 'KMSKS' region motif lies at 289–293 (KMSKS).

The protein belongs to the class-I aminoacyl-tRNA synthetase family. MshC subfamily. Monomer. Zn(2+) serves as cofactor.

The catalysed reaction is 1D-myo-inositol 2-amino-2-deoxy-alpha-D-glucopyranoside + L-cysteine + ATP = 1D-myo-inositol 2-(L-cysteinylamino)-2-deoxy-alpha-D-glucopyranoside + AMP + diphosphate + H(+). Its function is as follows. Catalyzes the ATP-dependent condensation of GlcN-Ins and L-cysteine to form L-Cys-GlcN-Ins. The sequence is that of L-cysteine:1D-myo-inositol 2-amino-2-deoxy-alpha-D-glucopyranoside ligase from Rhodococcus erythropolis (strain PR4 / NBRC 100887).